Consider the following 363-residue polypeptide: UDP-N-acetylglucosamine--N-acetylmuramyl-(pentapeptide) pyrophosphoryl-undecaprenol N-acetylglucosamine transferase (363 aa).

UDP-N-acetyl-alpha-D-glucosamine is bound by residues 14–16 (TGG), Arg171, Ser200, and Gln290.

It belongs to the glycosyltransferase 28 family. MurG subfamily.

It localises to the cell inner membrane. It carries out the reaction di-trans,octa-cis-undecaprenyl diphospho-N-acetyl-alpha-D-muramoyl-L-alanyl-D-glutamyl-meso-2,6-diaminopimeloyl-D-alanyl-D-alanine + UDP-N-acetyl-alpha-D-glucosamine = di-trans,octa-cis-undecaprenyl diphospho-[N-acetyl-alpha-D-glucosaminyl-(1-&gt;4)]-N-acetyl-alpha-D-muramoyl-L-alanyl-D-glutamyl-meso-2,6-diaminopimeloyl-D-alanyl-D-alanine + UDP + H(+). The protein operates within cell wall biogenesis; peptidoglycan biosynthesis. Cell wall formation. Catalyzes the transfer of a GlcNAc subunit on undecaprenyl-pyrophosphoryl-MurNAc-pentapeptide (lipid intermediate I) to form undecaprenyl-pyrophosphoryl-MurNAc-(pentapeptide)GlcNAc (lipid intermediate II). In Borreliella afzelii (strain PKo) (Borrelia afzelii), this protein is UDP-N-acetylglucosamine--N-acetylmuramyl-(pentapeptide) pyrophosphoryl-undecaprenol N-acetylglucosamine transferase.